Consider the following 1253-residue polypeptide: Cytoplasmic FMR1-interacting protein 1 homolog (1253 aa).

The protein belongs to the CYFIP family.

Its subcellular location is the cytoplasm. The protein resides in the perinuclear region. It localises to the cell projection. The protein localises to the lamellipodium. It is found in the ruffle. Its subcellular location is the synapse. The protein resides in the synaptosome. In terms of biological role, involved in formation of membrane ruffles and lamellipodia protrusions and in axon outgrowth. Binds to F-actin but not to RNA. The chain is Cytoplasmic FMR1-interacting protein 1 homolog from Danio rerio (Zebrafish).